The primary structure comprises 439 residues: Xylose isomerase (439 aa).

Catalysis depends on residues His101 and Asp104. Mg(2+) is bound by residues Glu232, Glu268, His271, Asp296, Asp307, Asp309, and Asp339.

Belongs to the xylose isomerase family. Homotetramer. It depends on Mg(2+) as a cofactor.

The protein resides in the cytoplasm. It carries out the reaction alpha-D-xylose = alpha-D-xylulofuranose. In Histophilus somni (strain 2336) (Haemophilus somnus), this protein is Xylose isomerase.